A 113-amino-acid chain; its full sequence is Iron-sulfur cluster insertion protein ErpA (113 aa).

Cys41, Cys105, and Cys107 together coordinate iron-sulfur cluster.

Belongs to the HesB/IscA family. In terms of assembly, homodimer. Iron-sulfur cluster serves as cofactor.

In terms of biological role, required for insertion of 4Fe-4S clusters for at least IspG. The polypeptide is Iron-sulfur cluster insertion protein ErpA (Actinobacillus succinogenes (strain ATCC 55618 / DSM 22257 / CCUG 43843 / 130Z)).